A 139-amino-acid polypeptide reads, in one-letter code: Putative pre-16S rRNA nuclease (139 aa).

Belongs to the YqgF nuclease family.

Its subcellular location is the cytoplasm. In terms of biological role, could be a nuclease involved in processing of the 5'-end of pre-16S rRNA. The sequence is that of Putative pre-16S rRNA nuclease from Legionella pneumophila (strain Lens).